The following is a 231-amino-acid chain: Verlamelin biosynthesis protein B (231 aa).

It functions in the pathway secondary metabolite biosynthesis. Functionally, part of the gene cluster that mediates the biosynthesis of verlamelin, a lipopeptide that exhibits antifungal activity against plant pathogenic fungi. Verlamelin is a cyclic hexadepsipeptide and is bridged by ester bonding between a 5-hydroxytetradecanoic acid moiety and a carboxyl group on the terminal Val of amide-bonded tetradecanoyl-hexapeptide D-allo-Thr-D-Ala-L-Pro-L-Gln-D-Tyr-L-Val. VlmA and vlmB are altogether regarded as essential components in the biosynthesis of 5-hydroxytetradecanoic acid. VlmA catalyzes the hydroxylation at position C5 of tetradecanoic acid produced in primary metabolism, while the precise function of vlmB still remains to be solved. To be loaded onto the waiting NRPS, 5-hydroxytetradecanoic acid is activated in the form of acyladenylate by the AMP-dependent ligase vlmC. VlmS seems to accept the fatty-acyl intermediate onto the initial module to further elongate amino acid residues by the downstream modules. In addition, in the last module at its C-terminus, vlmS contains a surplus condensation (C) domain that may be involved in cyclization, the last step to form verlamelin. This chain is Verlamelin biosynthesis protein B, found in Lecanicillium sp.